Reading from the N-terminus, the 847-residue chain is Bifunctional protein argC, mitochondrial (847 aa).

The segment at 100 to 331 (QIVLVKIGGG…PPSTSITITS (232 aa)) is acetylglutamate kinase. One can recognise an N-acetyltransferase domain in the interval 352–508 (GEVMHSHESP…CLSQSSTYLS (157 aa)). Residues 531 to 846 (FRVGLIGARG…LDELASIKNE (316 aa)) are N-acetyl-gamma-glutamyl-phosphate reductase. Cys-665 is a catalytic residue.

The protein in the N-terminal section; belongs to the acetylglutamate kinase family. It in the C-terminal section; belongs to the NAGSA dehydrogenase family.

The protein localises to the mitochondrion. It catalyses the reaction N-acetyl-L-glutamate 5-semialdehyde + phosphate + NADP(+) = N-acetyl-L-glutamyl 5-phosphate + NADPH + H(+). The catalysed reaction is N-acetyl-L-glutamate + ATP = N-acetyl-L-glutamyl 5-phosphate + ADP. It functions in the pathway amino-acid biosynthesis; L-arginine biosynthesis; N(2)-acetyl-L-ornithine from L-glutamate: step 2/4. It participates in amino-acid biosynthesis; L-arginine biosynthesis; N(2)-acetyl-L-ornithine from L-glutamate: step 3/4. The polypeptide is Bifunctional protein argC, mitochondrial (argC) (Dictyostelium discoideum (Social amoeba)).